Reading from the N-terminus, the 859-residue chain is Probable helicase A859L (859 aa).

One can recognise a Helicase ATP-binding domain in the interval 178 to 349; it reads YQELRRSGRA…KNRELFGGVA (172 aa). 191–198 provides a ligand contact to ATP; sequence MACRCGKT. The DEAH box motif lies at 298–301; that stretch reads DECH. Residues 394–553 enclose the Helicase C-terminal domain; sequence QIIMALAYLK…RFYEHLLNPS (160 aa).

Belongs to the asfivirus helicase A859L family.

This Ornithodoros (relapsing fever ticks) protein is Probable helicase A859L.